The sequence spans 378 residues: RNA polymerase sigma factor SigA (378 aa).

The tract at residues 1–29 is disordered; that stretch reads MKNKTEVKNGGEKKNSKKVSKEESAKEKN. Residues 145 to 215 form a sigma-70 factor domain-2 region; it reads LAEANLRLVV…TRAIADQART (71 aa). The Interaction with polymerase core subunit RpoC signature appears at 169–172; that stretch reads DLIQ. A sigma-70 factor domain-3 region spans residues 224 to 300; the sequence is ETINKLIRVS…DDEAPAPADA (77 aa). Residues 313 to 366 are sigma-70 factor domain-4; that stretch reads ILNTLTPREEKVLRLRFGLDDGRARTLEEVGKEFNVTRERIRQIEAKALRKLRH. Residues 339-358 constitute a DNA-binding region (H-T-H motif); that stretch reads LEEVGKEFNVTRERIRQIEA.

Belongs to the sigma-70 factor family. RpoD/SigA subfamily. In terms of assembly, interacts transiently with the RNA polymerase catalytic core.

The protein localises to the cytoplasm. Sigma factors are initiation factors that promote the attachment of RNA polymerase to specific initiation sites and are then released. This sigma factor is the primary sigma factor during exponential growth. The sequence is that of RNA polymerase sigma factor SigA from Clostridium acetobutylicum (strain ATCC 824 / DSM 792 / JCM 1419 / IAM 19013 / LMG 5710 / NBRC 13948 / NRRL B-527 / VKM B-1787 / 2291 / W).